The following is a 285-amino-acid chain: Probable endonuclease 4 (285 aa).

Residues H69, H109, E145, D179, H182, H216, D229, H231, and E261 each contribute to the Zn(2+) site.

This sequence belongs to the AP endonuclease 2 family. The cofactor is Zn(2+).

The catalysed reaction is Endonucleolytic cleavage to 5'-phosphooligonucleotide end-products.. Its function is as follows. Endonuclease IV plays a role in DNA repair. It cleaves phosphodiester bonds at apurinic or apyrimidinic (AP) sites, generating a 3'-hydroxyl group and a 5'-terminal sugar phosphate. This chain is Probable endonuclease 4, found in Shigella boydii serotype 18 (strain CDC 3083-94 / BS512).